We begin with the raw amino-acid sequence, 1081 residues long: DNA polymerase catalytic subunit (1081 aa).

Belongs to the DNA polymerase type-B family. As to quaternary structure, forms a complex with the ssDNA-binding protein UL29, the DNA polymerase processivity factor, and the alkaline exonuclease. Interacts with the putative helicase-primase complex subunit UL8; this interaction may coordinate leading and lagging strand DNA synthesis at the replication fork.

The protein resides in the host nucleus. It carries out the reaction DNA(n) + a 2'-deoxyribonucleoside 5'-triphosphate = DNA(n+1) + diphosphate. The catalysed reaction is Endonucleolytic cleavage to 5'-phosphomonoester.. Replicates viral genomic DNA. The replication complex is composed of six viral proteins: the DNA polymerase, processivity factor, primase, primase-associated factor, helicase, and ssDNA-binding protein. Additionally, the polymerase contains an intrinsic ribonuclease H (RNase H) activity that specifically degrades RNA/DNA heteroduplexes or duplex DNA substrates in the 5' to 3' direction. Therefore, it can catalyze the excision of the RNA primers that initiate the synthesis of Okazaki fragments at a replication fork during viral DNA replication. The protein is DNA polymerase catalytic subunit (UL30) of Psittacid herpesvirus 1 (isolate Amazon parrot/-/97-0001/1997) (PsHV-1).